Consider the following 944-residue polypeptide: Valine--tRNA ligase (944 aa).

Positions 43–53 (PNVTGTLHMGH) match the 'HIGH' region motif. The short motif at 550 to 554 (KMSKS) is the 'KMSKS' region element. K553 provides a ligand contact to ATP. Positions 878 to 942 (LVDMDAERTR…QLTGLREQRA (65 aa)) form a coiled coil.

This sequence belongs to the class-I aminoacyl-tRNA synthetase family. ValS type 1 subfamily. Monomer.

The protein localises to the cytoplasm. It carries out the reaction tRNA(Val) + L-valine + ATP = L-valyl-tRNA(Val) + AMP + diphosphate. In terms of biological role, catalyzes the attachment of valine to tRNA(Val). As ValRS can inadvertently accommodate and process structurally similar amino acids such as threonine, to avoid such errors, it has a 'posttransfer' editing activity that hydrolyzes mischarged Thr-tRNA(Val) in a tRNA-dependent manner. This is Valine--tRNA ligase from Xanthomonas axonopodis pv. citri (strain 306).